The primary structure comprises 345 residues: Biotin synthase (345 aa).

The 228-residue stretch at 66–293 (NTVQLSTLLS…RAMVRLSAGR (228 aa)) folds into the Radical SAM core domain. Residues Cys81, Cys85, and Cys88 each contribute to the [4Fe-4S] cluster site. The [2Fe-2S] cluster site is built by Cys125, Cys156, Cys216, and Arg288.

It belongs to the radical SAM superfamily. Biotin synthase family. Homodimer. It depends on [4Fe-4S] cluster as a cofactor. Requires [2Fe-2S] cluster as cofactor.

It carries out the reaction (4R,5S)-dethiobiotin + (sulfur carrier)-SH + 2 reduced [2Fe-2S]-[ferredoxin] + 2 S-adenosyl-L-methionine = (sulfur carrier)-H + biotin + 2 5'-deoxyadenosine + 2 L-methionine + 2 oxidized [2Fe-2S]-[ferredoxin]. The protein operates within cofactor biosynthesis; biotin biosynthesis; biotin from 7,8-diaminononanoate: step 2/2. In terms of biological role, catalyzes the conversion of dethiobiotin (DTB) to biotin by the insertion of a sulfur atom into dethiobiotin via a radical-based mechanism. This Cupriavidus metallidurans (strain ATCC 43123 / DSM 2839 / NBRC 102507 / CH34) (Ralstonia metallidurans) protein is Biotin synthase.